The chain runs to 706 residues: Polyribonucleotide nucleotidyltransferase (706 aa).

The Mg(2+) site is built by aspartate 486 and aspartate 492. One can recognise a KH domain in the interval 553-612; sequence PRIHTIKISTDKIKDVIGKGGSVIRALTEETGTTIEIEDDGTVKIASTDGEKAKHAIRRI. One can recognise an S1 motif domain in the interval 622–690; that stretch reads GRVYQGKVTR…RQGRVRLSIK (69 aa).

Belongs to the polyribonucleotide nucleotidyltransferase family. Component of the RNA degradosome, which is a multiprotein complex involved in RNA processing and mRNA degradation. Mg(2+) serves as cofactor.

It is found in the cytoplasm. The enzyme catalyses RNA(n+1) + phosphate = RNA(n) + a ribonucleoside 5'-diphosphate. Functionally, involved in mRNA degradation. Catalyzes the phosphorolysis of single-stranded polyribonucleotides processively in the 3'- to 5'-direction. The polypeptide is Polyribonucleotide nucleotidyltransferase (Pectobacterium carotovorum subsp. carotovorum (strain PC1)).